A 688-amino-acid polypeptide reads, in one-letter code: Elongation factor G (688 aa).

Residues 8–282 (ERTRNIGIMA…AVLDYLPAPT (275 aa)) enclose the tr-type G domain. GTP is bound by residues 17 to 24 (AHIDAGKT), 81 to 85 (DTPGH), and 135 to 138 (NKMD).

This sequence belongs to the TRAFAC class translation factor GTPase superfamily. Classic translation factor GTPase family. EF-G/EF-2 subfamily.

Its subcellular location is the cytoplasm. In terms of biological role, catalyzes the GTP-dependent ribosomal translocation step during translation elongation. During this step, the ribosome changes from the pre-translocational (PRE) to the post-translocational (POST) state as the newly formed A-site-bound peptidyl-tRNA and P-site-bound deacylated tRNA move to the P and E sites, respectively. Catalyzes the coordinated movement of the two tRNA molecules, the mRNA and conformational changes in the ribosome. The protein is Elongation factor G of Clostridioides difficile (strain 630) (Peptoclostridium difficile).